The following is a 223-amino-acid chain: Pyridoxine/pyridoxamine 5'-phosphate oxidase (223 aa).

Residues 8–11 and K65 contribute to the substrate site; that span reads RVDY. FMN is bound by residues 60–65, 75–76, R81, K82, and Q104; these read RTVLLK and YT. Residues Y122, R126, and S130 each coordinate substrate. Residues 139 to 140 and W188 each bind FMN; that span reads QS. 194-196 serves as a coordination point for substrate; it reads RLH. Position 198 (R198) interacts with FMN.

It belongs to the pyridoxamine 5'-phosphate oxidase family. In terms of assembly, homodimer. FMN is required as a cofactor.

It catalyses the reaction pyridoxamine 5'-phosphate + O2 + H2O = pyridoxal 5'-phosphate + H2O2 + NH4(+). It carries out the reaction pyridoxine 5'-phosphate + O2 = pyridoxal 5'-phosphate + H2O2. The protein operates within cofactor metabolism; pyridoxal 5'-phosphate salvage; pyridoxal 5'-phosphate from pyridoxamine 5'-phosphate: step 1/1. Its pathway is cofactor metabolism; pyridoxal 5'-phosphate salvage; pyridoxal 5'-phosphate from pyridoxine 5'-phosphate: step 1/1. In terms of biological role, catalyzes the oxidation of either pyridoxine 5'-phosphate (PNP) or pyridoxamine 5'-phosphate (PMP) into pyridoxal 5'-phosphate (PLP). The polypeptide is Pyridoxine/pyridoxamine 5'-phosphate oxidase (Kineococcus radiotolerans (strain ATCC BAA-149 / DSM 14245 / SRS30216)).